A 374-amino-acid chain; its full sequence is DNA replication and repair protein RecF (374 aa).

30-37 provides a ligand contact to ATP; that stretch reads GHNAQGKT.

This sequence belongs to the RecF family.

The protein localises to the cytoplasm. Its function is as follows. The RecF protein is involved in DNA metabolism; it is required for DNA replication and normal SOS inducibility. RecF binds preferentially to single-stranded, linear DNA. It also seems to bind ATP. This chain is DNA replication and repair protein RecF, found in Limosilactobacillus reuteri (strain DSM 20016) (Lactobacillus reuteri).